A 790-amino-acid chain; its full sequence is Phenylalanine--tRNA ligase beta subunit (790 aa).

The tRNA-binding domain occupies 39-154 (PDSLNTVVTG…ADTPLGESAC (116 aa)). In terms of domain architecture, B5 spans 404–483 (FSPLSLSVRP…FVQKTQKILP (80 aa)). Residues aspartate 457, aspartate 463, glutamate 466, and glutamate 467 each contribute to the Mg(2+) site. Residues 694–790 (PIYPASSRDI…KLANIGQGNS (97 aa)) enclose the FDX-ACB domain.

Belongs to the phenylalanyl-tRNA synthetase beta subunit family. Type 1 subfamily. Tetramer of two alpha and two beta subunits. It depends on Mg(2+) as a cofactor.

It localises to the cytoplasm. It carries out the reaction tRNA(Phe) + L-phenylalanine + ATP = L-phenylalanyl-tRNA(Phe) + AMP + diphosphate + H(+). This Chlamydia trachomatis serovar A (strain ATCC VR-571B / DSM 19440 / HAR-13) protein is Phenylalanine--tRNA ligase beta subunit.